Here is a 201-residue protein sequence, read N- to C-terminus: dITP/XTP pyrophosphatase (201 aa).

Threonine 8 to lysine 13 provides a ligand contact to substrate. The active-site Proton acceptor is the aspartate 68. Aspartate 68 contacts Mg(2+). Substrate contacts are provided by residues serine 69, phenylalanine 155 to aspartate 158, lysine 177, and histidine 182 to arginine 183.

This sequence belongs to the HAM1 NTPase family. In terms of assembly, homodimer. Mg(2+) is required as a cofactor.

It catalyses the reaction XTP + H2O = XMP + diphosphate + H(+). The enzyme catalyses dITP + H2O = dIMP + diphosphate + H(+). The catalysed reaction is ITP + H2O = IMP + diphosphate + H(+). In terms of biological role, pyrophosphatase that catalyzes the hydrolysis of nucleoside triphosphates to their monophosphate derivatives, with a high preference for the non-canonical purine nucleotides XTP (xanthosine triphosphate), dITP (deoxyinosine triphosphate) and ITP. Seems to function as a house-cleaning enzyme that removes non-canonical purine nucleotides from the nucleotide pool, thus preventing their incorporation into DNA/RNA and avoiding chromosomal lesions. The chain is dITP/XTP pyrophosphatase from Borrelia garinii subsp. bavariensis (strain ATCC BAA-2496 / DSM 23469 / PBi) (Borreliella bavariensis).